The chain runs to 838 residues: MTSTANYNNSGKDSYFSEIKKSELGLIKNNLSTAINERNADKIKDILQRIIYYMTIGMDVSVLFPDVIMVASSNDIIIKKLVYLYIVHYSKSNPDLLLLVVNTLRRDCIDRNPIIRGLALRSLCSLDSKNTLEYATIEINRSLTDFSGYVRKTALLGLAKLYHLSKEAFDLDIIIPKIFDMIMDQDPQVIVNAVSTLNEIKPGWSFTFDLVQHLMIKFKEFNEWSQCIILECLSRYTPSSEDESLDILNLLDDRLSHSNSALTLSTIKIFLKYTDEFEEIQEQVYERIKEPLITLMESSESNETSFTILHHIHLLMSRSPRLFNRYYKHFYCKFDDPLYIKTLKVQVLKEIASNQTFIESIDEILQELSEYVYEGDHSLCKQSINAITVIAQKHKNTQEKYPIDESVLEKIFLPYLSVSSNLGGAGDDNISINEGILSFILISLKDFLRVFPKHLKTVLPYINENLIGIGSVSNYTLPPSANESVLWMLGESPNSQVNSPYIIEEFFNEKFDQQPTFVKTQLLTTSLKVFFDRPGEMLPILKRILKKCCSDLSQDPGLHEISLFYSRIILLLDIDKAASIINSSKQTTSINTFLEDEINEYRDKIFDEFNTLSVLFGKHSTKFIKNKKQIENEKLQFLENQKNYLLSITDGNQNNNQNNNQNNNQNNNQNNNQNNQNNNNQNNNSKQLLKEIESSPNNLIDTFILDQQPELSPELFQSLWLSLEDGHKIDIQLDSPIDNSEIESVMSKQGIICLAFGSVDQQTKLYYYARQNLSFDIDFNSEQNQQQPQPIFIIEILIDENTLLMSILFKSPILKTLHNKFIPKFLSILSIPIPKIFN.

The tract at residues 582-673 (NSSKQTTSIN…NQNNNQNNNQ (92 aa)) is hinge. A disordered region spans residues 648–683 (ITDGNQNNNQNNNQNNNQNNNQNNNQNNQNNNNQNN). A compositionally biased stretch (low complexity) spans 652–683 (NQNNNQNNNQNNNQNNNQNNNQNNQNNNNQNN). Residues 674–838 (NNQNNNNQNN…LSIPIPKIFN (165 aa)) form an ear region.

The protein belongs to the adaptor complexes large subunit family. May be part of the adaptor protein complex 4 (AP-4), a heterotetramer composed of two large adaptins (epsilon-type subunitand beta-type subunit), a medium adaptin (mu-type subunit) and a small adaptin (sigma-type).

It localises to the golgi apparatus. Its subcellular location is the trans-Golgi network membrane. Functionally, probable component of an adaptor protein complex. Adaptor protein complexes are vesicle coat components involved both in vesicle formation and cargo selection. They control the vesicular transport of proteins in different trafficking pathways. This chain is AP-4 complex subunit beta (ap4b1), found in Dictyostelium discoideum (Social amoeba).